Consider the following 411-residue polypeptide: C6 finger domain transcription factor hasA (411 aa).

The span at 1 to 17 (MTSTLPYLTSPPATHPS) shows a compositional bias: polar residues. The tract at residues 1-21 (MTSTLPYLTSPPATHPSNSDH) is disordered. A DNA-binding region (zn(2)-C6 fungal-type) is located at residues 28-54 (CDSCHQCKVKCSGGSPCFRCTSKGLNC).

It localises to the nucleus. Transcription factor; part of the gene cluster that mediates the biosynthesis of hexadehydro-astechrome (HAS), a tryptophan-derived iron(III)-complex that acts as a virulence factor in infected mice. Positively regulates the expression of the HAS biosynthetic genes. The protein is C6 finger domain transcription factor hasA of Aspergillus fumigatus (strain CBS 144.89 / FGSC A1163 / CEA10) (Neosartorya fumigata).